Here is a 184-residue protein sequence, read N- to C-terminus: Peptide deformylase (184 aa).

Cysteine 98 and histidine 140 together coordinate Fe cation. Residue glutamate 141 is part of the active site. Histidine 144 provides a ligand contact to Fe cation.

It belongs to the polypeptide deformylase family. It depends on Fe(2+) as a cofactor.

The enzyme catalyses N-terminal N-formyl-L-methionyl-[peptide] + H2O = N-terminal L-methionyl-[peptide] + formate. Its function is as follows. Removes the formyl group from the N-terminal Met of newly synthesized proteins. Requires at least a dipeptide for an efficient rate of reaction. N-terminal L-methionine is a prerequisite for activity but the enzyme has broad specificity at other positions. This is Peptide deformylase from Bacteroides fragilis (strain ATCC 25285 / DSM 2151 / CCUG 4856 / JCM 11019 / LMG 10263 / NCTC 9343 / Onslow / VPI 2553 / EN-2).